The sequence spans 409 residues: Serine/threonine transporter SstT (409 aa).

A run of 9 helical transmembrane segments spans residues 17 to 37, 49 to 69, 83 to 103, 142 to 162, 180 to 200, 218 to 238, 301 to 321, 331 to 351, and 357 to 377; these read LVGQ…FFPA, FVSA…MASI, ILLL…IASF, ALIS…GIAF, VSLI…GLVA, LVVL…LIVF, GAAI…GIAV, VVAS…LLLI, and LFGI…IIAI.

It belongs to the dicarboxylate/amino acid:cation symporter (DAACS) (TC 2.A.23) family.

It localises to the cell inner membrane. It catalyses the reaction L-serine(in) + Na(+)(in) = L-serine(out) + Na(+)(out). The catalysed reaction is L-threonine(in) + Na(+)(in) = L-threonine(out) + Na(+)(out). Functionally, involved in the import of serine and threonine into the cell, with the concomitant import of sodium (symport system). The sequence is that of Serine/threonine transporter SstT from Pseudomonas aeruginosa (strain UCBPP-PA14).